We begin with the raw amino-acid sequence, 403 residues long: Flavohemoprotein (403 aa).

One can recognise a Globin domain in the interval 1-138 (MLTPEQKAIV…LADLMIGIEK (138 aa)). Histidine 85 lines the heme b pocket. Catalysis depends on charge relay system residues tyrosine 95 and glutamate 137. The reductase stretch occupies residues 149–403 (GGWRDFRPFR…SQSFAPVILG (255 aa)). One can recognise an FAD-binding FR-type domain in the interval 152–257 (RDFRPFRVAR…HVPAGDFVLQ (106 aa)). FAD is bound by residues tyrosine 190 and 206-209 (RQYS). Position 269-274 (269-274 (GVGITP)) interacts with NADP(+). 390–393 (TFGP) contributes to the FAD binding site.

Belongs to the globin family. Two-domain flavohemoproteins subfamily. This sequence in the C-terminal section; belongs to the flavoprotein pyridine nucleotide cytochrome reductase family. Heme b serves as cofactor. FAD is required as a cofactor.

The catalysed reaction is 2 nitric oxide + NADPH + 2 O2 = 2 nitrate + NADP(+) + H(+). It catalyses the reaction 2 nitric oxide + NADH + 2 O2 = 2 nitrate + NAD(+) + H(+). The chain is Flavohemoprotein from Deinococcus radiodurans (strain ATCC 13939 / DSM 20539 / JCM 16871 / CCUG 27074 / LMG 4051 / NBRC 15346 / NCIMB 9279 / VKM B-1422 / R1).